The following is a 249-amino-acid chain: Metallo-beta-lactamase type 2 (249 aa).

The first 22 residues, 1–22 (MLKKIKISLILALGLTSLQAFG), serve as a signal peptide directing secretion. Residues His-98, His-100, Asp-102, His-161, and Cys-180 each coordinate Zn(2+). Lys-183 lines the substrate pocket. Residue His-222 coordinates Zn(2+).

It belongs to the metallo-beta-lactamase superfamily. Class-B beta-lactamase family. In terms of assembly, monomer. It depends on Zn(2+) as a cofactor.

It is found in the periplasm. The enzyme catalyses a beta-lactam + H2O = a substituted beta-amino acid. Functionally, confers resistance to the different beta-lactams antibiotics (penicillin, cephalosporin and carbapenem) via the hydrolysis of the beta-lactam ring. The sequence is that of Metallo-beta-lactamase type 2 (blaB3) from Elizabethkingia meningoseptica (Chryseobacterium meningosepticum).